Consider the following 409-residue polypeptide: MELRVGNRYRLGRKIGSGSFGDIYLGTDISVGEEVAIKLECVKTKHPQLHIESKIYKMMQGGVGIPTIKWCGAEGDYNVMVMELLGPSLEDLFNFCSRKFSLKTVLLLADQMISRIEYIHSKNFIHRDVKPDNFLMGLGKKGNLVYIIDFGLAKKYRDARTHQHIPYRENKNLTGTARYASINTHLGIEQSRRDDLESLGYVLMYFNLGSLPWQGLKAATKRQKYERISEKKMSTPIEVLCKGYPSEFATYLNFCRSLRFDDKPDYSYLRQLFRNLFHRQGFSYDYVFDWNMLKFGANRTAEEADRERRERDERMRHSRNPAARGIPAASGRPRPTQDGAPPTPLTPTSHTANTSSPRPVTGMERERKVSMRLHRGAPVNVSSSDLTGRQDTSRMSTSQNSIPFDHHGK.

Residues 9–277 (YRLGRKIGSG…YLRQLFRNLF (269 aa)) form the Protein kinase domain. ATP contacts are provided by residues 15–23 (IGSGSFGDI) and K38. D128 serves as the catalytic Proton acceptor. Basic and acidic residues predominate over residues 300 to 315 (TAEEADRERRERDERM). The segment at 300–409 (TAEEADRERR…NSIPFDHHGK (110 aa)) is disordered. The segment at 317–341 (HSRNPAARGIPAASGRPRPTQDGAP) is autoinhibitory. Composition is skewed to polar residues over residues 346–358 (TPTSHTANTSSPR) and 380–402 (NVSSSDLTGRQDTSRMSTSQNSI).

Belongs to the protein kinase superfamily. Monomer. Interacts with per1 and per2. Component of the circadian core oscillator. In terms of processing, autophosphorylated on serine and threonine residues.

It localises to the cytoplasm. It is found in the nucleus. It catalyses the reaction L-seryl-[protein] + ATP = O-phospho-L-seryl-[protein] + ADP + H(+). The catalysed reaction is L-threonyl-[protein] + ATP = O-phospho-L-threonyl-[protein] + ADP + H(+). Its activity is regulated as follows. Exhibits substrate-dependent heparin activation. Casein kinases are operationally defined by their preferential utilization of acidic proteins such as caseins as substrates. Central component of the circadian clock. May act as a negative regulator of circadian rhythmicity by phosphorylating per1 and per2, which may lead to their degradation. Participates in wnt signaling. The chain is Casein kinase I isoform delta-B (csnk1db) from Danio rerio (Zebrafish).